Consider the following 366-residue polypeptide: Growth hormone secretagogue receptor type 1 (366 aa).

Topologically, residues 1 to 40 (MWNATPSEEPGPNLTLPDLGWDAPPENDSLVEELLPLFPT) are extracellular. N-linked (GlcNAc...) asparagine glycosylation is found at asparagine 13 and asparagine 27. Residues 41–66 (PLLAGVTATCVALFVVGIAGNLLTML) traverse the membrane as a helical segment. Residues 67-72 (VVSRFR) lie on the Cytoplasmic side of the membrane. A helical membrane pass occupies residues 73 to 96 (EMRTTTNLYLSSMAFSDLLIFLCM). Residues 97–117 (PLDLFRLWQYRPWNLGNLLCK) are Extracellular-facing. Cysteine 116 and cysteine 198 form a disulfide bridge. The helical transmembrane segment at 118–139 (LFQFVSESCTYATVLTITALSV) threads the bilayer. The Cytoplasmic segment spans residues 140 to 162 (ERYFAICFPLRAKVVVTKGRVKL). The chain crosses the membrane as a helical span at residues 163 to 183 (VILVIWAVAFCSAGPIFVLVG). Residues 184 to 211 (VEHDNGTDPRDTNECRATEFAVRSGLLT) lie on the Extracellular side of the membrane. Residues 212 to 235 (VMVWVSSVFFFLPVFCLTVLYSLI) traverse the membrane as a helical segment. The Cytoplasmic portion of the chain corresponds to 236–263 (GRKLWRRKRGEAAVGSSLRDQNHKQTVK). A helical membrane pass occupies residues 264-285 (MLAVVVFAFILCWLPFHVGRYL). Residues 286 to 302 (FSKSLEPGSVEIAQISQ) lie on the Extracellular side of the membrane. Residues 303 to 326 (YCNLVSFVLFYLSAAINPILYNIM) traverse the membrane as a helical segment. The Cytoplasmic portion of the chain corresponds to 327-366 (SKKYRVAVFKLLGFEPFSQRKLSTLKDESSRAWTESSINT).

It belongs to the G-protein coupled receptor 1 family. Pituitary and hypothalamus.

The protein localises to the cell membrane. Receptor for ghrelin, coupled to G-alpha-11 proteins. Stimulates growth hormone secretion. Also binds other growth hormone releasing peptides (GHRP) (e.g. Met-enkephalin and GHRP-6) as well as non-peptide, low molecular weight secretagogues (e.g. L-692,429, MK-0677, adenosine). The sequence is that of Growth hormone secretagogue receptor type 1 (GHSR) from Sus scrofa (Pig).